A 584-amino-acid chain; its full sequence is MDSHYGDIEGKDRAEEGLARQSLEIKVSSEPLTPANPVEQEPEPKPEPEPTQGREPESETQPVSDSSKAKDSEGIDYAHVEVPESPGAAETAGEAVSREPESLPQTQPKTKPESKEPEDKDEDEDEDEDEDEDEDEDEDEDEDEGEERDRPEKPKGKGKREKRKESRFRPSLPLTTIVEEGAAPGPQAAKEKARESLKKRDSEEIEGTDRERHKSTEEQLHPGEAKEEEKQKGASTEEFEWTADMQKLQEQQLRGELVEQYHSLLVERNRYQRYNMYLQQKIHETLRKKGLEAAAEPGDKSAEPESPEKEQAYLRYLAMLEELKKQEADDLEWYRQEVRELKQQCQEKQTRVEKEWRRFQALKKQVVMQVMGSCRTRGGRQAALREVEQLQALEDKKEKEMSAVRLENVQLKQSLVHFETRMKAQEDLAEGLLLIDFEQLKIENQTFNEKVEERNEELLKLRTKVTSNVQIITHVKEKLSFIDTENSCKKAQLSEVDAQVALGRDLLTKTKQARDSLRIDNVKLSQKCGLLGKESLLRDLEEKVEKTEMLNRRLESLKRHHAGLALSCKGVKQKIREAKTFLPS.

Basic and acidic residues-rich tracts occupy residues 1-18 (MDSHYGDIEGKDRAEEGL), 42-57 (PEPKPEPEPTQGREPE), and 67-82 (SKAKDSEGIDYAHVEV). The interval 1–243 (MDSHYGDIEG…ASTEEFEWTA (243 aa)) is disordered. Acidic residues predominate over residues 119-146 (DKDEDEDEDEDEDEDEDEDEDEDEDEGE). A compositionally biased stretch (basic and acidic residues) spans 189–232 (AKEKARESLKKRDSEEIEGTDRERHKSTEEQLHPGEAKEEEKQK). 2 coiled-coil regions span residues 317-470 (LAML…SNVQ) and 530-561 (LLGKESLLRDLEEKVEKTEMLNRRLESLKRHH).

It belongs to the CFAP184 family. Forms a complex with CFAP263; the interaction is required for functional activity in cilia.

The protein resides in the cell projection. It localises to the cilium. It is found in the cytoplasm. The protein localises to the cytoskeleton. Its subcellular location is the microtubule organizing center. The protein resides in the centrosome. In terms of biological role, in complex with CFAP263, acts as a regulator of ciliary beating that connects radial spoke 3 (RS3) to the inner dynein arm (IDA) and the nexin-dynein regulatory complex (N-DRC). The complex is positioned parallel to N-DRC and forms a connection between the arch at the base of RS3, the IDA tail and N-DRC. This is Cilia- and flagella-associated protein 184 (Cfap184) from Mus musculus (Mouse).